Reading from the N-terminus, the 135-residue chain is 2-iminobutanoate/2-iminopropanoate deaminase (135 aa).

Ser-2 is modified (N-acetylserine). Lys-13, Lys-60, Lys-67, and Lys-134 each carry N6-succinyllysine.

It belongs to the RutC family. As to quaternary structure, homotrimer. Interacts with YTHDF2. Expressed predominantly in liver and kidney. Lower levels in lung and brain.

It is found in the cytoplasm. The protein localises to the nucleus. The protein resides in the peroxisome. It localises to the mitochondrion. The enzyme catalyses 2-iminobutanoate + H2O = 2-oxobutanoate + NH4(+). The catalysed reaction is 2-iminopropanoate + H2O = pyruvate + NH4(+). Functionally, catalyzes the hydrolytic deamination of enamine/imine intermediates that form during the course of normal metabolism. May facilitate the release of ammonia from these potentially toxic reactive metabolites, reducing their impact on cellular components. It may act on enamine/imine intermediates formed by several types of pyridoxal-5'-phosphate-dependent dehydratases including L-threonine dehydratase. Its function is as follows. Also promotes endoribonucleolytic cleavage of some transcripts by promoting recruitment of the ribonuclease P/MRP complex. Acts by bridging YTHDF2 and the ribonuclease P/MRP complex. RIDA/HRSP12 binds to N6-methyladenosine (m6A)-containing mRNAs containing a 5'-GGUUC-3' motif: cooperative binding of RIDA/HRSP12 and YTHDF2 to such transcripts lead to recruitment of the ribonuclease P/MRP complex and subsequent endoribonucleolytic cleavage. In Mus musculus (Mouse), this protein is 2-iminobutanoate/2-iminopropanoate deaminase.